The primary structure comprises 76 residues: Small ribosomal subunit protein bS18 (76 aa).

This sequence belongs to the bacterial ribosomal protein bS18 family. Part of the 30S ribosomal subunit. Forms a tight heterodimer with protein bS6.

Binds as a heterodimer with protein bS6 to the central domain of the 16S rRNA, where it helps stabilize the platform of the 30S subunit. In Petrotoga mobilis (strain DSM 10674 / SJ95), this protein is Small ribosomal subunit protein bS18.